Here is an 86-residue protein sequence, read N- to C-terminus: Small ribosomal subunit protein bS16 (86 aa).

Belongs to the bacterial ribosomal protein bS16 family.

The sequence is that of Small ribosomal subunit protein bS16 from Borreliella burgdorferi (strain ATCC 35210 / DSM 4680 / CIP 102532 / B31) (Borrelia burgdorferi).